We begin with the raw amino-acid sequence, 189 residues long: dCTP deaminase (189 aa).

Residues 112 to 117, 136 to 138, Gln157, Tyr171, and Gln181 contribute to the dCTP site; these read KSTYAR and TLE. The active-site Proton donor/acceptor is the Glu138.

Belongs to the dCTP deaminase family. In terms of assembly, homotrimer.

It carries out the reaction dCTP + H2O + H(+) = dUTP + NH4(+). The protein operates within pyrimidine metabolism; dUMP biosynthesis; dUMP from dCTP (dUTP route): step 1/2. Catalyzes the deamination of dCTP to dUTP. This is dCTP deaminase from Nitrosospira multiformis (strain ATCC 25196 / NCIMB 11849 / C 71).